The primary structure comprises 490 residues: Beta-glucosidase 42 (490 aa).

Residues Q35, H137, 182 to 183 (NE), Y317, and E388 contribute to the a beta-D-glucoside site. E183 functions as the Proton donor in the catalytic mechanism. The active-site Nucleophile is the E388. N420 carries an N-linked (GlcNAc...) asparagine glycan. Residues W437, 444–445 (EW), and F453 each bind a beta-D-glucoside.

Belongs to the glycosyl hydrolase 1 family. Expressed at low levels predominantly in root epidermal cells.

The catalysed reaction is Hydrolysis of terminal, non-reducing beta-D-glucosyl residues with release of beta-D-glucose.. In terms of biological role, glucosidase that hydrolyzes scopolin and various beta-glucosides, cellooligosaccharides (mainly cellotriose) and laminarioligosaccharides. Can use p-nitrophenyl-beta-glucosides (pNP beta-Glc) and p-nitrophenyl-beta-D-fucosides (pNP beta-D-Fuc) as substrates, and, to a lower extent, beta-galactosides, beta-mannosides and beta-xylosides. Involved in the secretion of root-derived phenolics upon iron ions (Fe) depletion. Promotes disease resistance toward B.cinerea, H.arabidopsidis and P.syringae pv. tomato DC3000. Required during rhizobacteria-mediated (e.g. P.fluorescens WCS417r) broad-spectrum induced systemic resistance (ISR) against several pathogens. The polypeptide is Beta-glucosidase 42 (Arabidopsis thaliana (Mouse-ear cress)).